The chain runs to 683 residues: MEDKNIKDDEILDDQNDNQEDVQNQDEEKEIKPKKPKKKVYISDDENAEEIKKRIESLKNKNNNISFRVKPPIFFFLILILMSTLFYFYGNKTALFQEKREISYTQFVTKVKQGDITEIRESQEKLTGIKKVAGKVEVFETNKLTDRLGQDTYLMEISKEKNVNIVVLGTPVSSIITRAIFSFAPLFMLLFFFYFINKKMMGSSGGVIGNPFNIGKGKGKISERPNVKFSDVAGLTEEKEELKEIVEFLKNPARFEKAGARVPKGVLLLGEPGTGKTLLAKAVAGESEAAFFPISGSEFIELYVGVGASRVRELFKDAKKEAPAIIFIDEIDAVGRRRGQNKNGGGGNEEREQTLNQLLVEMDGFDTDQRIIVMAATNRSDVLDPALLRGGRFDRRIEVSRPDVKGRIEILKVHSRNKKLASDVKLEDIAKITPGFVGADLENLLNEAAILAARKNSDEITMEDLDEAVDKVGMGLGQKSKIISKRDKDMLAYHEGGHALAATLIPGANKVHKVTIIPRGDAGGYMMPLPEETLGKTRKQILAEINVLFAGRAGEELMMDDIATGAYSDIKRATELAKLLISSVGMSELGPINYEHSDNGFMLSSDLSNETAREIDLEVRKLLKFKYEETLNLLRDNKETLEKIATLLKEKETVTGSEIRALVSGSSVNEVLELDDEQLEKYY.

The disordered stretch occupies residues 1–43; sequence MEDKNIKDDEILDDQNDNQEDVQNQDEEKEIKPKKPKKKVYIS. The Cytoplasmic portion of the chain corresponds to 1-70; that stretch reads MEDKNIKDDE…KNNNISFRVK (70 aa). Acidic residues predominate over residues 10–28; sequence EILDDQNDNQEDVQNQDEE. Residues 71-91 form a helical membrane-spanning segment; it reads PPIFFFLILILMSTLFYFYGN. Residues 92-174 are Periplasmic-facing; sequence KTALFQEKRE…IVVLGTPVSS (83 aa). The chain crosses the membrane as a helical span at residues 175–195; that stretch reads IITRAIFSFAPLFMLLFFFYF. Residues 196 to 683 lie on the Cytoplasmic side of the membrane; it reads INKKMMGSSG…LDDEQLEKYY (488 aa). 270–277 serves as a coordination point for ATP; that stretch reads GEPGTGKT. His-494 is a Zn(2+) binding site. Glu-495 is an active-site residue. 2 residues coordinate Zn(2+): His-498 and Asp-569.

In the central section; belongs to the AAA ATPase family. This sequence in the C-terminal section; belongs to the peptidase M41 family. Homohexamer. It depends on Zn(2+) as a cofactor.

The protein localises to the cell inner membrane. Functionally, acts as a processive, ATP-dependent zinc metallopeptidase for both cytoplasmic and membrane proteins. Plays a role in the quality control of integral membrane proteins. This is ATP-dependent zinc metalloprotease FtsH from Streptobacillus moniliformis (strain ATCC 14647 / DSM 12112 / NCTC 10651 / 9901).